Consider the following 299-residue polypeptide: Protease HtpX homolog (299 aa).

A run of 2 helical transmembrane segments spans residues 15–35 and 39–59; these read ILLL…GYLF and GLGG…SMIF. Position 143 (His143) interacts with Zn(2+). Residue Glu144 is part of the active site. Residue His147 participates in Zn(2+) binding. The next 2 membrane-spanning stretches (helical) occupy residues 158 to 178 and 198 to 218; these read IAVA…RMMW and IIML…ATLV. Glu227 is a binding site for Zn(2+).

Belongs to the peptidase M48B family. The cofactor is Zn(2+).

It localises to the cell membrane. The chain is Protease HtpX homolog from Streptococcus pneumoniae (strain Taiwan19F-14).